A 108-amino-acid chain; its full sequence is UPF0145 protein LCABL_07110 (108 aa).

Belongs to the UPF0145 family.

This Lacticaseibacillus casei (strain BL23) (Lactobacillus casei) protein is UPF0145 protein LCABL_07110.